The primary structure comprises 463 residues: MSLRIYNTLSRAVEDFSPLVPGQVRMYVCGMTIYDLCHIGHARMMMAFDVVQRWLKASGYEVRYVRNITDIDDKIIKRAVERGITIRALTDEMIAAMHQDIGALGIEPPTLEPRATEYVPQMLAMIGKLEEKGLAYRGSSGDMNYAVRKFPGYGKLSGKSLDELRAGERVAVLEGKDDPLDFVLWKSAKESEPEDAKWDSAALGHDYGKGRPGWHIECSAMSCQTLGETFDIHGGGADLQFPHHENEIAQSEGANGKPLARFWVHNGFVRVDNEKMSKSLGNFFTIRDVLQKYDAETIRFFIIRAHYRSALNYSDAHLDDARNSLKRLYTALALVAPATVEIDWADPFAARFKAAMDEDFGTPEAIAVLFELAGEVNKTHSAERAGLLKSLGACLGLLQGEPSAYLQAGAGLDDAAIQALITQRADAKKARDFAAADRIRTELLGQGIVLKDSPLGTTWEVQS.

Cysteine 29 provides a ligand contact to Zn(2+). The short motif at 31-41 is the 'HIGH' region element; sequence MTIYDLCHIGH. Residues cysteine 218, histidine 243, and glutamate 247 each coordinate Zn(2+). The 'KMSKS' region signature appears at 275 to 279; sequence KMSKS. Position 278 (lysine 278) interacts with ATP.

Belongs to the class-I aminoacyl-tRNA synthetase family. As to quaternary structure, monomer. Zn(2+) serves as cofactor.

The protein localises to the cytoplasm. The catalysed reaction is tRNA(Cys) + L-cysteine + ATP = L-cysteinyl-tRNA(Cys) + AMP + diphosphate. In Polaromonas naphthalenivorans (strain CJ2), this protein is Cysteine--tRNA ligase.